The following is a 254-amino-acid chain: 5-oxoprolinase subunit A (254 aa).

Belongs to the LamB/PxpA family. Forms a complex composed of PxpA, PxpB and PxpC.

The enzyme catalyses 5-oxo-L-proline + ATP + 2 H2O = L-glutamate + ADP + phosphate + H(+). Functionally, catalyzes the cleavage of 5-oxoproline to form L-glutamate coupled to the hydrolysis of ATP to ADP and inorganic phosphate. In Burkholderia ambifaria (strain MC40-6), this protein is 5-oxoprolinase subunit A.